The chain runs to 258 residues: Coiled-coil domain-containing protein 107 (258 aa).

An N-terminal signal peptide occupies residues 1-24 (MASVVSLAGTLGLLLVSALPEVLG). Basic and acidic residues predominate over residues 25–35 (DRRSPDRRAHP). The segment at 25–63 (DRRSPDRRAHPGDAGQVGPAAAEPRRQSPPSKNQRERAR) is disordered. A helical membrane pass occupies residues 66 to 86 (ALPLGALYTAAAVAFVLYKCL). Residues 106–134 (LQSEQHLAQLTQQLVQTEQHLNSLMAQLD) adopt a coiled-coil conformation. The disordered stretch occupies residues 203 to 222 (EPLNWNTGTRNLTPPREMQP).

The protein resides in the membrane. The polypeptide is Coiled-coil domain-containing protein 107 (CCDC107) (Bos taurus (Bovine)).